Here is a 157-residue protein sequence, read N- to C-terminus: Ribosomal RNA large subunit methyltransferase H (157 aa).

Residues Leu-73, Gly-105, and 124–129 contribute to the S-adenosyl-L-methionine site; that span reads MSKMTF.

It belongs to the RNA methyltransferase RlmH family. As to quaternary structure, homodimer.

Its subcellular location is the cytoplasm. The catalysed reaction is pseudouridine(1915) in 23S rRNA + S-adenosyl-L-methionine = N(3)-methylpseudouridine(1915) in 23S rRNA + S-adenosyl-L-homocysteine + H(+). In terms of biological role, specifically methylates the pseudouridine at position 1915 (m3Psi1915) in 23S rRNA. The chain is Ribosomal RNA large subunit methyltransferase H from Bacteroides thetaiotaomicron (strain ATCC 29148 / DSM 2079 / JCM 5827 / CCUG 10774 / NCTC 10582 / VPI-5482 / E50).